Consider the following 242-residue polypeptide: Pyridoxine 5'-phosphate synthase (242 aa).

N7 is a binding site for 3-amino-2-oxopropyl phosphate. Residue D9–H10 participates in 1-deoxy-D-xylulose 5-phosphate binding. Residue R18 coordinates 3-amino-2-oxopropyl phosphate. The active-site Proton acceptor is the H43. Residues R45 and H50 each coordinate 1-deoxy-D-xylulose 5-phosphate. The Proton acceptor role is filled by E70. Residue T100 coordinates 1-deoxy-D-xylulose 5-phosphate. The Proton donor role is filled by H190. 3-amino-2-oxopropyl phosphate-binding positions include G191 and G212–H213.

It belongs to the PNP synthase family. Homooctamer; tetramer of dimers.

The protein resides in the cytoplasm. It catalyses the reaction 3-amino-2-oxopropyl phosphate + 1-deoxy-D-xylulose 5-phosphate = pyridoxine 5'-phosphate + phosphate + 2 H2O + H(+). Its pathway is cofactor biosynthesis; pyridoxine 5'-phosphate biosynthesis; pyridoxine 5'-phosphate from D-erythrose 4-phosphate: step 5/5. In terms of biological role, catalyzes the complicated ring closure reaction between the two acyclic compounds 1-deoxy-D-xylulose-5-phosphate (DXP) and 3-amino-2-oxopropyl phosphate (1-amino-acetone-3-phosphate or AAP) to form pyridoxine 5'-phosphate (PNP) and inorganic phosphate. The chain is Pyridoxine 5'-phosphate synthase from Thermodesulfovibrio yellowstonii (strain ATCC 51303 / DSM 11347 / YP87).